The primary structure comprises 169 residues: Protein-export protein SecB (169 aa).

The protein belongs to the SecB family. In terms of assembly, homotetramer, a dimer of dimers. One homotetramer interacts with 1 SecA dimer.

Its subcellular location is the cytoplasm. In terms of biological role, one of the proteins required for the normal export of preproteins out of the cell cytoplasm. It is a molecular chaperone that binds to a subset of precursor proteins, maintaining them in a translocation-competent state. It also specifically binds to its receptor SecA. This is Protein-export protein SecB from Haemophilus influenzae (strain 86-028NP).